A 350-amino-acid polypeptide reads, in one-letter code: Deoxyhypusine synthase-like protein (350 aa).

It belongs to the deoxyhypusine synthase family.

This Chlorobaculum tepidum (strain ATCC 49652 / DSM 12025 / NBRC 103806 / TLS) (Chlorobium tepidum) protein is Deoxyhypusine synthase-like protein.